Here is a 461-residue protein sequence, read N- to C-terminus: Fibrinogen C domain-containing protein 1 (461 aa).

Residues 1-24 are disordered; it reads MVNDRWKTMGGAAQLEDRPRDKPQ. The Cytoplasmic portion of the chain corresponds to 1–33; that stretch reads MVNDRWKTMGGAAQLEDRPRDKPQRPSCGYVLC. Residues 15–24 are compositionally biased toward basic and acidic residues; sequence LEDRPRDKPQ. Residues 34 to 54 form a helical; Signal-anchor for type II membrane protein membrane-spanning segment; that stretch reads TVLLALAVLLAVAVTGAVLFL. At 55–461 the chain is on the extracellular side; that stretch reads NHAHAPGTAP…MKIRPVREDR (407 aa). The disordered stretch occupies residues 214–238; that stretch reads GRPRNKADLQRAPARGTRPRGCATG. Residues 235–458 form the Fibrinogen C-terminal domain; that stretch reads CATGSRPRDC…FSEMKIRPVR (224 aa). The cysteines at positions 244 and 273 are disulfide-linked. N340 carries an N-linked (GlcNAc...) asparagine glycan. Ca(2+) contacts are provided by D393 and D395. C401 and C414 are disulfide-bonded.

In terms of assembly, homotetramer; disulfide-linked. As to expression, expressed in the small and large intestinal epithelial cells with a highly polarized localization to the apical surface corresponding to the brush border and in the ducts of the salivary gland.

Its subcellular location is the membrane. In terms of biological role, acetyl group-binding receptor which shows a high-affinity and calcium-dependent binding to acetylated structures such as chitin, some N-acetylated carbohydrates, and amino acids, but not to their non-acetylated counterparts. Can facilitate the endocytosis of acetylated components. The protein is Fibrinogen C domain-containing protein 1 (FIBCD1) of Homo sapiens (Human).